Consider the following 1108-residue polypeptide: AP-3 complex subunit beta (1108 aa).

HEAT repeat units lie at residues 90–127 (DSAL…IDII), 327–363 (IEAQ…LRPS), 397–433 (ENIG…STVP), and 434–471 (DVTE…LNAT). A compositionally biased stretch (basic and acidic residues) spans 480–490 (KEKEKEKDVKE). Disordered stretches follow at residues 480–501 (KEKE…HSSS), 736–797 (DEEE…YDGE), and 811–835 (LFGI…GEEE). 2 stretches are compositionally biased toward acidic residues: residues 736 to 764 (DEEE…EDFF) and 780 to 797 (YDED…YDGE).

It belongs to the adaptor complexes large subunit family. Adaptor protein complex 3 (AP-3) is a heterotetramer composed of two large adaptins (delta-type subunit and beta-type subunit), a medium adaptin (mu-type subunit) and a small adaptin (sigma-type subunit).

The protein resides in the endosome membrane. Its function is as follows. Part of the AP-3 complex, an adaptor-related complex which is essential for the compartmentalization of the endocytic pathway. This is AP-3 complex subunit beta (ap3b-1) from Dictyostelium discoideum (Social amoeba).